The primary structure comprises 83 residues: Exodeoxyribonuclease 7 small subunit (83 aa).

This sequence belongs to the XseB family. In terms of assembly, heterooligomer composed of large and small subunits.

It localises to the cytoplasm. It catalyses the reaction Exonucleolytic cleavage in either 5'- to 3'- or 3'- to 5'-direction to yield nucleoside 5'-phosphates.. Functionally, bidirectionally degrades single-stranded DNA into large acid-insoluble oligonucleotides, which are then degraded further into small acid-soluble oligonucleotides. The chain is Exodeoxyribonuclease 7 small subunit from Allorhizobium ampelinum (strain ATCC BAA-846 / DSM 112012 / S4) (Agrobacterium vitis (strain S4)).